Reading from the N-terminus, the 226-residue chain is Cytochrome c oxidase subunit 2 (226 aa).

Over 1-14 the chain is Mitochondrial intermembrane; the sequence is MAYPLQLGLQDATS. Residues 15 to 45 form a helical membrane-spanning segment; the sequence is PIMEELTSFHDHTLMIVFLISTLVLYIISLM. Residues 46 to 59 are Mitochondrial matrix-facing; that stretch reads LTTKLTHTSTMDAQ. A helical transmembrane segment spans residues 60–87; sequence EIETIWTILPAIILIMIALPSLRVLYMM. Topologically, residues 88 to 226 are mitochondrial intermembrane; the sequence is DEINNPALTV…KYFEAWSASM (139 aa). Positions 161, 196, 198, 200, 204, and 207 each coordinate Cu cation. Position 198 (Glu-198) interacts with Mg(2+). The residue at position 218 (Tyr-218) is a Phosphotyrosine.

The protein belongs to the cytochrome c oxidase subunit 2 family. In terms of assembly, component of the cytochrome c oxidase (complex IV, CIV), a multisubunit enzyme composed of 14 subunits. The complex is composed of a catalytic core of 3 subunits MT-CO1, MT-CO2 and MT-CO3, encoded in the mitochondrial DNA, and 11 supernumerary subunits COX4I, COX5A, COX5B, COX6A, COX6B, COX6C, COX7A, COX7B, COX7C, COX8 and NDUFA4, which are encoded in the nuclear genome. The complex exists as a monomer or a dimer and forms supercomplexes (SCs) in the inner mitochondrial membrane with NADH-ubiquinone oxidoreductase (complex I, CI) and ubiquinol-cytochrome c oxidoreductase (cytochrome b-c1 complex, complex III, CIII), resulting in different assemblies (supercomplex SCI(1)III(2)IV(1) and megacomplex MCI(2)III(2)IV(2)). Found in a complex with TMEM177, COA6, COX18, COX20, SCO1 and SCO2. Interacts with TMEM177 in a COX20-dependent manner. Interacts with COX20. Interacts with COX16. Requires Cu cation as cofactor.

Its subcellular location is the mitochondrion inner membrane. The catalysed reaction is 4 Fe(II)-[cytochrome c] + O2 + 8 H(+)(in) = 4 Fe(III)-[cytochrome c] + 2 H2O + 4 H(+)(out). Component of the cytochrome c oxidase, the last enzyme in the mitochondrial electron transport chain which drives oxidative phosphorylation. The respiratory chain contains 3 multisubunit complexes succinate dehydrogenase (complex II, CII), ubiquinol-cytochrome c oxidoreductase (cytochrome b-c1 complex, complex III, CIII) and cytochrome c oxidase (complex IV, CIV), that cooperate to transfer electrons derived from NADH and succinate to molecular oxygen, creating an electrochemical gradient over the inner membrane that drives transmembrane transport and the ATP synthase. Cytochrome c oxidase is the component of the respiratory chain that catalyzes the reduction of oxygen to water. Electrons originating from reduced cytochrome c in the intermembrane space (IMS) are transferred via the dinuclear copper A center (CU(A)) of subunit 2 and heme A of subunit 1 to the active site in subunit 1, a binuclear center (BNC) formed by heme A3 and copper B (CU(B)). The BNC reduces molecular oxygen to 2 water molecules using 4 electrons from cytochrome c in the IMS and 4 protons from the mitochondrial matrix. The sequence is that of Cytochrome c oxidase subunit 2 (MT-CO2) from Perognathus flavus (Silky pocket mouse).